The following is a 124-amino-acid chain: Small ribosomal subunit protein bS6 (124 aa).

It belongs to the bacterial ribosomal protein bS6 family.

Functionally, binds together with bS18 to 16S ribosomal RNA. The sequence is that of Small ribosomal subunit protein bS6 from Haemophilus ducreyi (strain 35000HP / ATCC 700724).